Reading from the N-terminus, the 406-residue chain is MIGTRLPAWTRVLACGVAGLSLMTISAKAEDVITLGASVQLSGPVANTGRYYQDAYNITIDKINAAGGVKVDGKPYKLALKIYDNQSNVNLSVRQYTQLVTTDKVNFLLGPFASNFALADSVISEKYRIPMVQGGGASDEIYSRNFKYIFGTLAPASNYFGSTVEMLKGLDPKVTNVALVYADDSFDVSVADGTRKLLKDAGFTIAADEKFATNSTDFTSLISQIKSKNVDAVLVAGHETEVLNFVRQSKSLAFDPKLYSFTVGVPTEDFRKALGKDANYAFGMTAWLPSADLKDRWFGDAAKFETEYKARFNYEPDYHAASGASDVEAFAEAIEKANSLDPQKVRDALASIKFDSLYGPIAFDKQGQINLPQIVVQVQDGKLVEIRGPAGQVNPPQYPMPAWNAR.

An N-terminal signal peptide occupies residues 1–29 (MIGTRLPAWTRVLACGVAGLSLMTISAKA).

The protein belongs to the leucine-binding protein family.

Its function is as follows. Component of an amino-acid transport system. The polypeptide is Leu/Ile/Val-binding protein homolog 5 (Brucella abortus (strain 2308)).